We begin with the raw amino-acid sequence, 283 residues long: Tetrahydroxynaphthalene reductase (283 aa).

Residues 1-21 (MPAVTQPRGESKYDAIPGPLG) form a disordered region. 39–63 (RGIGREMAMELGRRGCKVIVNYANS) is an NADP(+) binding site. Residue Ser-164 coordinates substrate. The active-site Proton acceptor is the Tyr-178.

It belongs to the short-chain dehydrogenases/reductases (SDR) family. In terms of assembly, homotetramer.

The catalysed reaction is scytalone + NADP(+) = naphthalene-1,3,6,8-tetrol + NADPH + H(+). It participates in pigment biosynthesis; melanin biosynthesis. Catalyzes the NADPH-dependent reduction of 1,3,6,8-tetrahydroxynaphthalene (T4HN) into (+)-scytalone and 1,3,8-trihydroxynaphthalene into (-)-vermelone. This enzyme is the biochemical target of several commercially important fungicides which are used to prevent blast disease in rice plants. In Pyricularia oryzae (strain 70-15 / ATCC MYA-4617 / FGSC 8958) (Rice blast fungus), this protein is Tetrahydroxynaphthalene reductase.